A 514-amino-acid polypeptide reads, in one-letter code: FAD-dependent monooxygenase AacuC (514 aa).

The interval 1–29 is disordered; the sequence is MVSNEYLTHGDKDEFDPAKWSSTPGELPP. Residues 8 to 17 are compositionally biased toward basic and acidic residues; that stretch reads THGDKDEFDP. FAD is bound by residues V79 and R146. Residue R227 is part of the active site. FAD is bound by residues D358 and G371.

Belongs to the paxM FAD-dependent monooxygenase family. Requires FAD as cofactor.

The protein operates within secondary metabolite biosynthesis. Functionally, FAD-dependent monooxygenase; part of the gene cluster that mediates the biosynthesis of the tetrahydroxanthone dimer secalonic acid D. The pathway begins with the synthesis of atrochrysone thioester by the polyketide synthase AacuL. The atrochrysone carboxyl ACP thioesterase AacuM then breaks the thioester bond and releases the atrochrysone carboxylic acid from AacuL. Atrochrysone carboxylic acid is decarboxylated by the decarboxylase AacuI, and oxidized by the anthrone oxygenase AacuG to yield emodin. Emodin is then reduced to emodin hydroquinone by a yet unidentified oxidoreductase. A-ring reduction by the short chain dehydrogenase AacuN, dehydration by the scytalone dehydratase-like protein AacuK and probable spontaneous re-oxidation, results in overall deoxygenation to chrysophanol. Baeyer-Villiger oxidation by the Baeyer-Villiger monooxygenase (BVMO) AacuH then yields monodictyphenone. Monodictyphenone is transformed into compounds with the tetrahydroxanthone skeleton via methylesterification by the methyltransferase AacuQ, followed by the action of the flavin-dependent monooxygenase AacuC, the isomerase AacuP, and the short chain dehydrogenase/reductase AacuF or AacuD. AacuF and AacuD should accept the same compound as a substrate but perform the ketoreduction with a different stereoselectivity, thus yielding blennolides B and A, respectively. In the final step of the biosynthesis, the cytochrome P450 monooxygenase AacuE accepts blennolide B and/or blennolide A to conduct the dimerization reaction to furnish the tetrahydroxanthone dimers, secalonic acids D, B, and F. In Aspergillus aculeatus (strain ATCC 16872 / CBS 172.66 / WB 5094), this protein is FAD-dependent monooxygenase AacuC.